Consider the following 469-residue polypeptide: 3-isopropylmalate dehydratase large subunit (469 aa).

[4Fe-4S] cluster is bound by residues Cys350, Cys410, and Cys413.

It belongs to the aconitase/IPM isomerase family. LeuC type 1 subfamily. Heterodimer of LeuC and LeuD. It depends on [4Fe-4S] cluster as a cofactor.

It catalyses the reaction (2R,3S)-3-isopropylmalate = (2S)-2-isopropylmalate. It participates in amino-acid biosynthesis; L-leucine biosynthesis; L-leucine from 3-methyl-2-oxobutanoate: step 2/4. Catalyzes the isomerization between 2-isopropylmalate and 3-isopropylmalate, via the formation of 2-isopropylmaleate. This chain is 3-isopropylmalate dehydratase large subunit, found in Rhizobium etli (strain CIAT 652).